A 203-amino-acid chain; its full sequence is V-type ATP synthase subunit D (203 aa).

Belongs to the V-ATPase D subunit family.

Its function is as follows. Produces ATP from ADP in the presence of a proton gradient across the membrane. The polypeptide is V-type ATP synthase subunit D (Chlamydia trachomatis serovar L2 (strain ATCC VR-902B / DSM 19102 / 434/Bu)).